A 182-amino-acid polypeptide reads, in one-letter code: ATP-dependent protease subunit HslV (182 aa).

Threonine 2 is an active-site residue. The Na(+) site is built by glycine 157, cysteine 160, and threonine 163.

The protein belongs to the peptidase T1B family. HslV subfamily. In terms of assembly, a double ring-shaped homohexamer of HslV is capped on each side by a ring-shaped HslU homohexamer. The assembly of the HslU/HslV complex is dependent on binding of ATP.

The protein resides in the cytoplasm. It carries out the reaction ATP-dependent cleavage of peptide bonds with broad specificity.. Its activity is regulated as follows. Allosterically activated by HslU binding. In terms of biological role, protease subunit of a proteasome-like degradation complex believed to be a general protein degrading machinery. The sequence is that of ATP-dependent protease subunit HslV from Vibrio atlanticus (strain LGP32) (Vibrio splendidus (strain Mel32)).